Consider the following 56-residue polypeptide: Large ribosomal subunit protein bL32 (56 aa).

Residues 1-35 are disordered; it reads MAVQQNKPTRSKRGMRRSHDALTATHVSVDKTSGE.

The protein belongs to the bacterial ribosomal protein bL32 family.

The polypeptide is Large ribosomal subunit protein bL32 (Proteus mirabilis (strain HI4320)).